An 88-amino-acid chain; its full sequence is Small ribosomal subunit protein uS15c (88 aa).

It belongs to the universal ribosomal protein uS15 family. In terms of assembly, part of the 30S ribosomal subunit.

It localises to the plastid. The protein localises to the chloroplast. This Physcomitrium patens (Spreading-leaved earth moss) protein is Small ribosomal subunit protein uS15c (rps15).